A 54-amino-acid polypeptide reads, in one-letter code: Ribulose bisphosphate carboxylase large chain (54 aa).

The propeptide occupies 1–2; the sequence is MS. Residue proline 3 is modified to N-acetylproline. Lysine 14 bears the N6,N6,N6-trimethyllysine mark.

The protein belongs to the RuBisCO large chain family. Type I subfamily. Heterohexadecamer of 8 large chains and 8 small chains.

Its subcellular location is the plastid. The protein localises to the chloroplast. The catalysed reaction is 2 (2R)-3-phosphoglycerate + 2 H(+) = D-ribulose 1,5-bisphosphate + CO2 + H2O. It catalyses the reaction D-ribulose 1,5-bisphosphate + O2 = 2-phosphoglycolate + (2R)-3-phosphoglycerate + 2 H(+). Functionally, ruBisCO catalyzes two reactions: the carboxylation of D-ribulose 1,5-bisphosphate, the primary event in carbon dioxide fixation, as well as the oxidative fragmentation of the pentose substrate in the photorespiration process. Both reactions occur simultaneously and in competition at the same active site. This Magnolia liliiflora (Mulan magnolia) protein is Ribulose bisphosphate carboxylase large chain (rbcL).